The primary structure comprises 985 residues: NAD kinase 2, chloroplastic (985 aa).

A chloroplast-targeting transit peptide spans 1-62; the sequence is MFLCFCPCHV…KRRLRFVIRA (62 aa). Residues 335–380 form a calmodulin-binding region; it reads APKAEQVELFASIVSDSSKRPIYVHSKEGVWRTSAMVSRWKQYMTR. Disordered stretches follow at residues 389–466 and 548–615; these read SEES…PPGN and FSNG…DEAG. Composition is skewed to basic and acidic residues over residues 390–399 and 413–429; these read EESKRREVSE and VPDE…EVDS. Positions 548-569 are enriched in polar residues; the sequence is FSNGNVHASDNTNKSISDNRGN.

This sequence belongs to the NAD kinase family. As to expression, expressed in leaves.

It is found in the plastid. The protein resides in the chloroplast. It catalyses the reaction NAD(+) + ATP = ADP + NADP(+) + H(+). In terms of biological role, involved in chlorophyll synthesis and chloroplast protection against oxidative damage. The polypeptide is NAD kinase 2, chloroplastic (NADK2) (Arabidopsis thaliana (Mouse-ear cress)).